We begin with the raw amino-acid sequence, 417 residues long: Serine hydroxymethyltransferase (417 aa).

(6S)-5,6,7,8-tetrahydrofolate contacts are provided by residues leucine 121 and 125-127 (GHL). The residue at position 230 (lysine 230) is an N6-(pyridoxal phosphate)lysine. 355–357 (SPF) is a (6S)-5,6,7,8-tetrahydrofolate binding site.

This sequence belongs to the SHMT family. As to quaternary structure, homodimer. It depends on pyridoxal 5'-phosphate as a cofactor.

It is found in the cytoplasm. The enzyme catalyses (6R)-5,10-methylene-5,6,7,8-tetrahydrofolate + glycine + H2O = (6S)-5,6,7,8-tetrahydrofolate + L-serine. Its pathway is one-carbon metabolism; tetrahydrofolate interconversion. It participates in amino-acid biosynthesis; glycine biosynthesis; glycine from L-serine: step 1/1. Its function is as follows. Catalyzes the reversible interconversion of serine and glycine with tetrahydrofolate (THF) serving as the one-carbon carrier. This reaction serves as the major source of one-carbon groups required for the biosynthesis of purines, thymidylate, methionine, and other important biomolecules. Also exhibits THF-independent aldolase activity toward beta-hydroxyamino acids, producing glycine and aldehydes, via a retro-aldol mechanism. The protein is Serine hydroxymethyltransferase of Legionella pneumophila subsp. pneumophila (strain Philadelphia 1 / ATCC 33152 / DSM 7513).